We begin with the raw amino-acid sequence, 501 residues long: Aldehyde dehydrogenase, cytosolic 1 (501 aa).

The residue at position 2 (S2) is an N-acetylserine. N6-acetyllysine occurs at positions 91 and 128. 246 to 251 (GSTEVG) provides a ligand contact to NAD(+). K252 is subject to N6-acetyllysine. E269 serves as the catalytic Proton acceptor. The Nucleophile role is filled by C303. N6-acetyllysine occurs at positions 353, 367, and 410. The residue at position 413 (S413) is a Phosphoserine. Residues K419 and K435 each carry the N6-acetyllysine modification.

The protein belongs to the aldehyde dehydrogenase family. In terms of assembly, homotetramer. Highest level in liver, high level in lung, low level in kidney and testis.

Its subcellular location is the cytoplasm. It catalyses the reaction an aldehyde + NAD(+) + H2O = a carboxylate + NADH + 2 H(+). Its pathway is alcohol metabolism; ethanol degradation; acetate from ethanol: step 2/2. Its function is as follows. Can oxidize benzaldehyde, propionaldehyde and acetaldehyde. No detectable activity with retinal. This Mus musculus (Mouse) protein is Aldehyde dehydrogenase, cytosolic 1.